Reading from the N-terminus, the 378-residue chain is Homoserine O-acetyltransferase (378 aa).

The 286-residue stretch at 52–337 folds into the AB hydrolase-1 domain; sequence NAILICHALT…YSQHGHDTFL (286 aa). Ser148 acts as the Nucleophile in catalysis. Substrate is bound at residue Arg217. Active-site residues include Asp304 and His333. Residue Asp334 participates in substrate binding.

Belongs to the AB hydrolase superfamily. MetX family. As to quaternary structure, homodimer.

It localises to the cytoplasm. It carries out the reaction L-homoserine + acetyl-CoA = O-acetyl-L-homoserine + CoA. It participates in amino-acid biosynthesis; L-methionine biosynthesis via de novo pathway; O-acetyl-L-homoserine from L-homoserine: step 1/1. Transfers an acetyl group from acetyl-CoA to L-homoserine, forming acetyl-L-homoserine. The polypeptide is Homoserine O-acetyltransferase (Chloroherpeton thalassium (strain ATCC 35110 / GB-78)).